Consider the following 453-residue polypeptide: MKFFALAALFASTVNSIAVDGLIPGARVIPANDVVALKKAGAYHQKHHHRRTVIIRSSSSDEDDVSADFLWGIKRANHGGRLLLQNGKKYVIGKKLDLTFLKDIEVQLDGELKFTNDVPYWQANNFYYDFQKSISFWRWGGEDIKIFGSGVLNGNGQRWYNEFAGQEILDPNNKYYRPILFVTENATRVSVEGITQLNSPCWTNFFVRTKDISFDNVFIHAYSTNASALPKNTDGFDTLNVDGLTVTNTRVDIGDDCLSPKPNTTNVFVKNLWCNGTHGASMGSIGQYPGVLDIIENVWIENVTLLNGENGARLKAWAGPDVGYGRINNVTYKNIHVENTDNPIVLDQCYFNINATQCAAYPSRVNFTNIVFEDIYGTSSGKRGKVVADLTCSPNAVCSGIRLKNIHLTSPAGSPPVIVCDGIQGDIGVECQSSSNSTTRRSVDLARSLKYRA.

Positions M1–S16 are cleaved as a signal peptide. N-linked (GlcNAc...) asparagine glycans are attached at residues N185 and N225. D255 serves as the catalytic Proton donor. C257 and C274 are disulfide-bonded. N263 and N275 each carry an N-linked (GlcNAc...) asparagine glycan. Residue H278 is part of the active site. PbH1 repeat units lie at residues I295–A316 and I327–Q348. 4 N-linked (GlcNAc...) asparagine glycosylation sites follow: N302, N329, N354, and N366. The stretch at P362–N405 is one PbH1 3 repeat. C392 and C398 are joined by a disulfide. The N-linked (GlcNAc...) asparagine glycan is linked to N436.

This sequence belongs to the glycosyl hydrolase 28 family.

It localises to the secreted. The enzyme catalyses [(1-&gt;4)-alpha-D-galacturonosyl](n) + H2O = alpha-D-galacturonate + [(1-&gt;4)-alpha-D-galacturonosyl](n-1). Its function is as follows. Specific in hydrolyzing the terminal glycosidic bond of polygalacturonic acid and oligogalacturonates. This Aspergillus fumigatus (strain ATCC MYA-4609 / CBS 101355 / FGSC A1100 / Af293) (Neosartorya fumigata) protein is Probable exopolygalacturonase B (pgxB).